The sequence spans 314 residues: Methionyl-tRNA formyltransferase (314 aa).

113 to 116 (SLLP) serves as a coordination point for (6S)-5,6,7,8-tetrahydrofolate.

Belongs to the Fmt family.

The catalysed reaction is L-methionyl-tRNA(fMet) + (6R)-10-formyltetrahydrofolate = N-formyl-L-methionyl-tRNA(fMet) + (6S)-5,6,7,8-tetrahydrofolate + H(+). Attaches a formyl group to the free amino group of methionyl-tRNA(fMet). The formyl group appears to play a dual role in the initiator identity of N-formylmethionyl-tRNA by promoting its recognition by IF2 and preventing the misappropriation of this tRNA by the elongation apparatus. This chain is Methionyl-tRNA formyltransferase, found in Ectopseudomonas mendocina (strain ymp) (Pseudomonas mendocina).